A 240-amino-acid polypeptide reads, in one-letter code: Ion-translocating oxidoreductase complex subunit E (240 aa).

A run of 5 helical transmembrane segments spans residues 41–61 (LGLG…VSLV), 71–91 (LPAF…LMQA), 95–115 (ELYQ…VILG), 130–150 (SFDG…LGGL), and 184–204 (GFLL…LIAL).

It belongs to the NqrDE/RnfAE family. The complex is composed of six subunits: RnfA, RnfB, RnfC, RnfD, RnfE and RnfG.

Its subcellular location is the cell inner membrane. Functionally, part of a membrane-bound complex that couples electron transfer with translocation of ions across the membrane. This Pseudomonas aeruginosa (strain ATCC 15692 / DSM 22644 / CIP 104116 / JCM 14847 / LMG 12228 / 1C / PRS 101 / PAO1) protein is Ion-translocating oxidoreductase complex subunit E.